Here is a 299-residue protein sequence, read N- to C-terminus: Protein phosphatase 1 regulatory subunit 3D (299 aa).

The tract at residues 1–22 is disordered; sequence MSRGPSSAVLPSALGSRKLGPR. A phosphoserine mark is found at Ser-23, Ser-25, and Ser-28. The disordered stretch occupies residues 37-94; sequence EPRACRPPGSPGRAPPPTPAPSGCDPRLRPIILRRARSLPSSPERRQKAAGAPGAACR. Pro residues predominate over residues 44-56; that stretch reads PGSPGRAPPPTPA. Low complexity predominate over residues 57–67; sequence PSGCDPRLRPI. Ser-74 carries the phosphoserine modification. Over residues 85 to 94 the composition is skewed to low complexity; it reads AAGAPGAACR. The short motif at 101 to 104 is the PP1-binding motif element; that stretch reads LRVR. A Phosphoserine modification is found at Ser-133. The CBM21 domain maps to 169–278; the sequence is GERLQRQLVC…NNDHRDYSLT (110 aa).

As to quaternary structure, interacts with PPP1CC catalytic subunit of PP1, and associates with glycogen. Interacts with EPM2A; in the presence of NHLC1/malin the interaction leads to PPP1R3D ubiquitination and autophagic degradation. As to expression, expressed in all tissues tested. High expression in skeletal muscle and heart.

Seems to act as a glycogen-targeting subunit for PP1. PP1 is essential for cell division, and participates in the regulation of glycogen metabolism, muscle contractility and protein synthesis. This Homo sapiens (Human) protein is Protein phosphatase 1 regulatory subunit 3D (PPP1R3D).